A 297-amino-acid chain; its full sequence is Bifunctional protein FolD 1 (297 aa).

Residues Gly-174 to Ser-176, Ser-199, and Ile-240 contribute to the NADP(+) site.

This sequence belongs to the tetrahydrofolate dehydrogenase/cyclohydrolase family. In terms of assembly, homodimer.

It catalyses the reaction (6R)-5,10-methylene-5,6,7,8-tetrahydrofolate + NADP(+) = (6R)-5,10-methenyltetrahydrofolate + NADPH. The enzyme catalyses (6R)-5,10-methenyltetrahydrofolate + H2O = (6R)-10-formyltetrahydrofolate + H(+). It functions in the pathway one-carbon metabolism; tetrahydrofolate interconversion. Its function is as follows. Catalyzes the oxidation of 5,10-methylenetetrahydrofolate to 5,10-methenyltetrahydrofolate and then the hydrolysis of 5,10-methenyltetrahydrofolate to 10-formyltetrahydrofolate. The sequence is that of Bifunctional protein FolD 1 from Acinetobacter baylyi (strain ATCC 33305 / BD413 / ADP1).